Consider the following 460-residue polypeptide: Cation efflux system protein CusC (460 aa).

Positions 1–17 (MSPCKLLPFCVALALTG) are cleaved as a signal peptide. The N-palmitoyl cysteine moiety is linked to residue C18. C18 carries S-diacylglycerol cysteine lipidation.

This sequence belongs to the outer membrane factor (OMF) (TC 1.B.17) family. Homotrimer. Component of the cus efflux system composed of CusA, CusB, CusC and CusF.

The protein resides in the cell outer membrane. Forms pores that allow passive diffusion of cations across the outer membrane. Part of a cation efflux system that mediates resistance to copper and silver. The protein is Cation efflux system protein CusC (cusC) of Escherichia coli O6:H1 (strain CFT073 / ATCC 700928 / UPEC).